A 152-amino-acid polypeptide reads, in one-letter code: Lipoprotein signal peptidase (152 aa).

A run of 3 helical transmembrane segments spans residues 5–25 (LFVL…FWIV), 61–81 (WFFV…LATH), and 84–104 (LNIW…GNFI). Residues aspartate 114 and aspartate 130 contribute to the active site. Residues 125-145 (IFNVADSYLTVGVILLVICLW) traverse the membrane as a helical segment.

The protein belongs to the peptidase A8 family.

The protein localises to the cell membrane. The enzyme catalyses Release of signal peptides from bacterial membrane prolipoproteins. Hydrolyzes -Xaa-Yaa-Zaa-|-(S,diacylglyceryl)Cys-, in which Xaa is hydrophobic (preferably Leu), and Yaa (Ala or Ser) and Zaa (Gly or Ala) have small, neutral side chains.. It participates in protein modification; lipoprotein biosynthesis (signal peptide cleavage). This protein specifically catalyzes the removal of signal peptides from prolipoproteins. This Streptococcus pyogenes serotype M2 (strain MGAS10270) protein is Lipoprotein signal peptidase.